A 651-amino-acid polypeptide reads, in one-letter code: tRNA uridine 5-carboxymethylaminomethyl modification enzyme MnmG (651 aa).

11–16 serves as a coordination point for FAD; the sequence is GAGHAG. 296-310 lines the NAD(+) pocket; sequence GPRYCPSIEDKIVRF.

Belongs to the MnmG family. In terms of assembly, homodimer. Heterotetramer of two MnmE and two MnmG subunits. FAD is required as a cofactor.

It localises to the cytoplasm. Its function is as follows. NAD-binding protein involved in the addition of a carboxymethylaminomethyl (cmnm) group at the wobble position (U34) of certain tRNAs, forming tRNA-cmnm(5)s(2)U34. In Chloroflexus aurantiacus (strain ATCC 29366 / DSM 635 / J-10-fl), this protein is tRNA uridine 5-carboxymethylaminomethyl modification enzyme MnmG.